The primary structure comprises 434 residues: Eukaryotic translation initiation factor 3 subunit E (434 aa).

One can recognise a PCI domain in the interval 219–392 (FFNHPKGRDL…GHVVMGTQPL (174 aa)).

Belongs to the eIF-3 subunit E family. In terms of assembly, component of the eukaryotic translation initiation factor 3 (eIF-3) complex. The eIF-3 complex interacts with pix. Interacts with mxt.

It localises to the cytoplasm. Its function is as follows. Component of the eukaryotic translation initiation factor 3 (eIF-3) complex, which is involved in protein synthesis of a specialized repertoire of mRNAs and, together with other initiation factors, stimulates binding of mRNA and methionyl-tRNAi to the 40S ribosome. The eIF-3 complex specifically targets and initiates translation of a subset of mRNAs involved in cell proliferation. This is Eukaryotic translation initiation factor 3 subunit E (eIF3-S6) from Drosophila virilis (Fruit fly).